Consider the following 561-residue polypeptide: Inositol phosphate phosphatase SopB (561 aa).

The active site involves Cys-460. The short motif at 460-466 (CKSGKDR) is the CX5R motif element.

It belongs to the phosphatase IpgD/SopB family.

It localises to the secreted. Its function is as follows. Converts phosphatidylinositol 3,4,5-trisphosphate (PtdIns 3,4,5-P3) to PtdIns 3-P and prevents the transition of PtdIns 3-P to PtdIns 3,5-P2. It is one of the known effectors injected by Salmonella into the host cell and is required for invasion and for an efficient generation and maintenance of Salmonella-containing vacuole (SVC). Alteration of the phosphoinositide composition of the plasma membrane causes membrane ruffling and actin cytoskeleton rearrangements. The persistence of PtdIns 3-P diverts the SCV from the endocytic pathway resulting in enlarged vesicles, which are essential to create a favorable environment where Salmonella can replicate and avoid immune defenses of the host cell. In Salmonella typhimurium (strain LT2 / SGSC1412 / ATCC 700720), this protein is Inositol phosphate phosphatase SopB (sopB).